The chain runs to 642 residues: Chaperone protein DnaK (642 aa).

Thr196 carries the post-translational modification Phosphothreonine; by autocatalysis. A compositionally biased stretch (polar residues) spans 593–603; sequence STMYQTPSGDT. The interval 593–642 is disordered; it reads STMYQTPSGDTPPSEPETGASEESKGGDKTQGDGEVDAEYEVIDGNDKDK. The segment covering 614–624 has biased composition (basic and acidic residues); the sequence is EESKGGDKTQG. The span at 626–636 shows a compositional bias: acidic residues; the sequence is GEVDAEYEVID.

The protein belongs to the heat shock protein 70 family.

In terms of biological role, acts as a chaperone. This Chlorobium phaeobacteroides (strain BS1) protein is Chaperone protein DnaK.